Reading from the N-terminus, the 736-residue chain is Gephyrin (736 aa).

The MPT Mo-transferase stretch occupies residues 14-166 (QIRVGVLTVS…FILPALPHAI (153 aa)). The interaction with GABARAP stretch occupies residues 140–316 (LIINLPGSKK…VDITKVARRH (177 aa)). Disordered regions lie at residues 181–232 (DELE…DSSS) and 260–290 (TASLSTTPSESPRAQATSRLSTASCPTPKVQ). A compositionally biased stretch (pro residues) spans 187-199 (PSPPPPLSPPPTT). Phosphoserine occurs at positions 188 and 194. Phosphothreonine is present on Thr198. Position 200 is a phosphoserine (Ser200). Cys212 is lipidated: S-palmitoyl cysteine. The span at 261 to 290 (ASLSTTPSESPRAQATSRLSTASCPTPKVQ) shows a compositional bias: polar residues. Ser262 bears the Phosphoserine mark. A phosphothreonine mark is found at Thr265 and Thr266. Ser268 and Ser270 each carry phosphoserine. Cys284 carries the S-palmitoyl cysteine lipid modification. Ser305 is modified (phosphoserine). The tract at residues 326 to 736 (MDKAFITVLE…VVDVMVIGRL (411 aa)) is MPT adenylyltransferase.

This sequence in the N-terminal section; belongs to the MoaB/Mog family. The protein in the C-terminal section; belongs to the MoeA family. In terms of assembly, homotrimer, homodimer and homooligomer. Interacts with GABARAP. Interacts with SRGAP2 (via SH3 domain). Interacts with GABRA3. Interacts with GLRB. GABRA3 and GLRB occupy overlapping binding sites. Interacts with ARHGAP32; IQSEC3, INSYN1 and INSYN2A. Requires Mg(2+) as cofactor. Post-translationally, palmitoylated. Palmitoylation is stimulated by GABA type A receptors activity. Palmitoylation by ZDHHC12 regulates clustering at synapses.

It localises to the postsynaptic cell membrane. The protein localises to the cell membrane. The protein resides in the cytoplasm. It is found in the cytosol. Its subcellular location is the cytoskeleton. It localises to the cell projection. The protein localises to the dendrite. The protein resides in the postsynaptic density. It carries out the reaction molybdopterin + ATP + H(+) = adenylyl-molybdopterin + diphosphate. The enzyme catalyses adenylyl-molybdopterin + molybdate = Mo-molybdopterin + AMP + H(+). The protein operates within cofactor biosynthesis; molybdopterin biosynthesis. Its activity is regulated as follows. Inhibited by copper and tungsten. Its function is as follows. Microtubule-associated protein involved in membrane protein-cytoskeleton interactions. It is thought to anchor the inhibitory glycine receptor (GLYR) to subsynaptic microtubules. Acts as a major instructive molecule at inhibitory synapses, where it also clusters GABA type A receptors. Also has a catalytic activity and catalyzes two steps in the biosynthesis of the molybdenum cofactor. In the first step, molybdopterin is adenylated. Subsequently, molybdate is inserted into adenylated molybdopterin and AMP is released. This is Gephyrin from Homo sapiens (Human).